Consider the following 423-residue polypeptide: Anhydromevalonate phosphate decarboxylase (423 aa).

Mn(2+) is bound by residues Asn-134 and Glu-197. Catalysis depends on Asp-245, which acts as the Proton acceptor.

Belongs to the UbiD family. Requires prenylated FMN as cofactor. Mn(2+) is required as a cofactor.

The catalysed reaction is (2E)-3-methyl-5-phosphooxypent-2-enoate + H(+) = isopentenyl phosphate + CO2. It functions in the pathway isoprenoid biosynthesis; isopentenyl diphosphate biosynthesis via mevalonate pathway. In terms of biological role, catalyzes the conversion of trans-anhydromevalonate 5-phosphate (tAHMP) into isopentenyl phosphate. Involved in the archaeal mevalonate (MVA) pathway, which provides fundamental precursors for isoprenoid biosynthesis, such as isopentenyl diphosphate (IPP) and dimethylallyl diphosphate (DMAPP). In Methanothermobacter thermautotrophicus (strain ATCC 29096 / DSM 1053 / JCM 10044 / NBRC 100330 / Delta H) (Methanobacterium thermoautotrophicum), this protein is Anhydromevalonate phosphate decarboxylase.